We begin with the raw amino-acid sequence, 469 residues long: Cytosolic beta-glucosidase (469 aa).

The substrate site is built by glutamine 17, histidine 120, and asparagine 164. The active-site Proton donor is the glutamate 165. Tyrosine 309 contacts substrate. The Nucleophile role is filled by glutamate 373. Residues tryptophan 417 and 424–425 (EW) each bind substrate.

The protein belongs to the glycosyl hydrolase 1 family. Klotho subfamily. May interact with NEU2. Post-translationally, the N-terminus is blocked. In terms of tissue distribution, present in small intestine (at protein level). Expressed in liver, small intestine, colon, spleen and kidney. Down-regulated in renal cell carcinomas and hepatocellular carcinomas.

The protein resides in the cytoplasm. The protein localises to the cytosol. The catalysed reaction is Hydrolysis of terminal, non-reducing beta-D-glucosyl residues with release of beta-D-glucose.. It carries out the reaction a beta-D-glucosyl-(1&lt;-&gt;1')-N-acylsphing-4-enine + H2O = an N-acylsphing-4-enine + D-glucose. The enzyme catalyses a beta-D-galactosyl-(1&lt;-&gt;1')-N-acylsphing-4-enine + H2O = an N-acylsphing-4-enine + D-galactose. It catalyses the reaction beta-D-glucosyl-(1&lt;-&gt;1)-sphing-4-enine + H2O = sphing-4-enine + D-glucose. The catalysed reaction is beta-D-glucosyl-(1&lt;-&gt;1)-N-octadecanoylsphing-4-enine + H2O = N-octadecanoylsphing-4-enine + D-glucose. It carries out the reaction beta-D-galactosyl-(1&lt;-&gt;1)-sphing-4-enine + H2O = sphing-4-enine + D-galactose. The enzyme catalyses beta-D-galactosyl-(1&lt;-&gt;1')-N-octadecanoylsphing-4-enine + H2O = N-octadecanoylsphing-4-enine + D-galactose. It catalyses the reaction a beta-D-xylosyl-(1&lt;-&gt;1')-N-acylsphing-4-enine + cholesterol = cholesteryl 3-beta-D-xyloside + an N-acylsphing-4-enine. With respect to regulation, inhibited by 2,4-dinitrophenyl-2-fluoro-2-deoxy-beta-D-glucopyranoside. Inhibited by sodium taurocholate. Inhibited by alpha-1-C-nonyl-DIX/AnDIX. The glucosylceramidase activity is slightly inhibited by conduritol B epoxide/CBE while the galactosylceramidase activity is not. Its function is as follows. Neutral cytosolic beta-glycosidase with a broad substrate specificity that could play a role in the catabolism of glycosylceramides. Has a significant glucosylceramidase activity in vitro. However, that activity is relatively low and its significance in vivo is not clear. Hydrolyzes galactosylceramides/GalCers, glucosylsphingosines/GlcSphs and galactosylsphingosines/GalSphs. However, the in vivo relevance of these activities is unclear. It can also hydrolyze a broad variety of dietary glycosides including phytoestrogens, flavonols, flavones, flavanones and cyanogens in vitro and could therefore play a role in the metabolism of xenobiotics. Possesses transxylosylase activity in vitro using xylosylated ceramides/XylCers (such as beta-D-xylosyl-(1&lt;-&gt;1')-N-acylsphing-4-enine) as xylosyl donors and cholesterol as acceptor. Could also play a role in the catabolism of cytosolic sialyl free N-glycans. In Homo sapiens (Human), this protein is Cytosolic beta-glucosidase.